Reading from the N-terminus, the 37-residue chain is Large ribosomal subunit protein bL36 (37 aa).

Belongs to the bacterial ribosomal protein bL36 family.

The protein is Large ribosomal subunit protein bL36 of Streptomyces avermitilis (strain ATCC 31267 / DSM 46492 / JCM 5070 / NBRC 14893 / NCIMB 12804 / NRRL 8165 / MA-4680).